The chain runs to 287 residues: Nucleotide-binding protein HD_0584 (287 aa).

ATP is bound at residue 8-15 (GRSGSGKS). 56-59 (DIRN) is a GTP binding site.

The protein belongs to the RapZ-like family.

Displays ATPase and GTPase activities. The sequence is that of Nucleotide-binding protein HD_0584 from Haemophilus ducreyi (strain 35000HP / ATCC 700724).